We begin with the raw amino-acid sequence, 317 residues long: L-lactate dehydrogenase (317 aa).

NAD(+)-binding positions include Val17, Asp38, Lys43, and 82–83; that span reads GA. Residues Gln85, Arg91, and 123-126 each bind substrate; that span reads NPVD. NAD(+)-binding positions include 121–123 and Ser146; that span reads VAN. 151–154 contacts substrate; it reads DSAR. 2 residues coordinate beta-D-fructose 1,6-bisphosphate: Arg156 and His171. His178 acts as the Proton acceptor in catalysis. Phosphotyrosine is present on Tyr224. Thr233 contributes to the substrate binding site.

This sequence belongs to the LDH/MDH superfamily. LDH family. Homotetramer.

It is found in the cytoplasm. The enzyme catalyses (S)-lactate + NAD(+) = pyruvate + NADH + H(+). It functions in the pathway fermentation; pyruvate fermentation to lactate; (S)-lactate from pyruvate: step 1/1. Allosterically activated by fructose 1,6-bisphosphate (FBP). In terms of biological role, catalyzes the conversion of lactate to pyruvate. In Moorella thermoacetica (strain ATCC 39073 / JCM 9320), this protein is L-lactate dehydrogenase.